The following is a 440-amino-acid chain: Transposon Ty1-NL1 Gag polyprotein (440 aa).

Polar residues-rich tracts occupy residues 1–23 (MESQ…SVTS), 48–60 (TKAN…TPAS), 71–86 (SPQT…GPYQ), and 131–152 (PQYP…GNTF). Disordered stretches follow at residues 1 to 86 (MESQ…GPYQ), 131 to 171 (PQYP…YVRP), and 350 to 425 (QQES…TEPI). Residues 153-165 (TDSSSADSDMTST) show a composition bias toward low complexity. The tract at residues 299–401 (NNGIPINNKV…NSQSRTARAH (103 aa)) is RNA-binding. Residues 363–372 (NPSDEKKDSR) show a composition bias toward basic and acidic residues. Polar residues predominate over residues 373-412 (TYTNTTKPKSITRNSQKPNNSQSRTARAHNVSTSNNSSGP).

As to quaternary structure, homotrimer.

The protein resides in the cytoplasm. Functionally, capsid protein (CA) is the structural component of the virus-like particle (VLP), forming the shell that encapsulates the retrotransposons dimeric RNA genome. The particles are assembled from trimer-clustered units and there are holes in the capsid shells that allow for the diffusion of macromolecules. CA also has nucleocapsid-like chaperone activity, promoting primer tRNA(i)-Met annealing to the multipartite primer-binding site (PBS), dimerization of Ty1 RNA and initiation of reverse transcription. The polypeptide is Transposon Ty1-NL1 Gag polyprotein (TY1A-NL1) (Saccharomyces cerevisiae (strain ATCC 204508 / S288c) (Baker's yeast)).